The sequence spans 427 residues: Intermediate conductance calcium-activated potassium channel protein 4 (427 aa).

Residues A29–F49 form a helical membrane-spanning segment. A helical transmembrane segment spans residues F59–F79. The chain crosses the membrane as a helical span at residues I108–V128. The chain crosses the membrane as a helical span at residues G143 to V163. The chain crosses the membrane as a helical span at residues L207–E227. Positions L241–M261 form an intramembrane region, pore-forming. A helical transmembrane segment spans residues I265 to V285. Positions A286–A347 are calmodulin-binding. H358 carries the phosphohistidine modification.

It belongs to the potassium channel KCNN family. KCa3.1/KCNN4 subfamily. Homodimer. Homotetramer. Heterotetramer of potassium channel proteins. Interacts with MTMR6; this interaction leads to selective dephosphorylation of PI(3)P in a lipid microdomain adjacent to KCNN4, resulting in a decrease of intermediate conductance calcium-activated potassium channel activity. Interacts (via the C-tail domain) with CALM1; the calmodulin binding is constitutive, does not require calcium and mediates calcium-dependent gating and four calmodulin molecules bind to one channel tetramer. In terms of processing, phosphorylation at His-358 by NDKB activates the intermediate conductance calcium-activated potassium channel activity, and conversely it's dephosphorylation by PHPT1 inhibits this activity. Widely expressed in non-excitable tissues.

It localises to the cell membrane. The protein localises to the cell projection. The protein resides in the ruffle membrane. The catalysed reaction is K(+)(in) = K(+)(out). With respect to regulation, the channel is inhibited by clotrimazole and charybdotoxin but is insensitive to apamin. Its function is as follows. Intermediate conductance calcium-activated potassium channel that mediates the voltage-independent transmembrane transfer of potassium across the cell membrane through a constitutive interaction with calmodulin which binds the intracellular calcium allowing its opening. The current is characterized by a voltage-independent activation, an intracellular calcium concentration increase-dependent activation and a single-channel conductance of about 25 picosiemens. Also presents an inwardly rectifying current, thus reducing its already small outward conductance of potassium ions, which is particularly the case when the membrane potential displays positive values, above + 20 mV. Controls calcium influx during vascular contractility by being responsible of membrane hyperpolarization induced by vasoactive factors in proliferative vascular smooth muscle cell types. Following calcium influx, the consecutive activation of KCNN4 channel leads to a hyperpolarization of the cell membrane potential and hence an increase of the electrical driving force for further calcium influx promoting sustained calcium entry in response to stimulation with chemotactic peptides. Required for maximal calcium influx and proliferation during the reactivation of naive T-cells. Plays a role in the late stages of EGF-induced macropinocytosis through activation by PI(3)P. This is Intermediate conductance calcium-activated potassium channel protein 4 from Homo sapiens (Human).